Reading from the N-terminus, the 2897-residue chain is Chromodomain-helicase-DNA-binding protein 9 (2897 aa).

Over residues 173 to 201 the composition is skewed to polar residues; it reads QCTSLRSQQNRNNLNPGQNSLSQSKNFMN. Disordered stretches follow at residues 173 to 265, 482 to 525, and 537 to 671; these read QCTS…CSVS, QRQP…KQEK, and AKER…SAPL. Residue Lys197 forms a Glycyl lysine isopeptide (Lys-Gly) (interchain with G-Cter in SUMO2) linkage. Residues 220–235 show a composition bias toward low complexity; that stretch reads SNSQQSISMQQFSQTS. 2 stretches are compositionally biased toward polar residues: residues 247–260 and 484–506; these read HQEG…PNMT and QPPS…TQVR. An N6-acetyllysine modification is found at Lys499. Over residues 508–525 the composition is skewed to basic and acidic residues; sequence MSEKKQRKKVESESKQEK. Ser550 is modified (phosphoserine). Residues 573 to 593 show a composition bias toward basic and acidic residues; that stretch reads KPKDKDSKKTKTCSKLKEKTK. Lys596 is covalently cross-linked (Glycyl lysine isopeptide (Lys-Gly) (interchain with G-Cter in SUMO2)). Ser611 carries the post-translational modification Phosphoserine. Basic residues predominate over residues 634–644; it reads RRSNRQIKRKK. Positions 645–660 are enriched in basic and acidic residues; that stretch reads YAEDIEGKQSEEEVKG. Chromo domains are found at residues 690 to 761 and 773 to 839; these read AIVD…HFFA and VEVD…RLDR. Positions 868-872 match the LXXLL motif 1 motif; sequence LNWLL. A Helicase ATP-binding domain is found at 872–1046; it reads LFNWYNRRNC…FSLLHFLEPL (175 aa). 885 to 892 is a binding site for ATP; sequence DEMGLGKT. The DEAH box motif lies at 997–1000; the sequence is DEAH. Residues 1036-1040 carry the LXXLL motif 2 motif; sequence LFSLL. Residues 1186-1337 form the Helicase C-terminal domain; it reads LIDKLLPKMK…KAVLQSMSGR (152 aa). Residues 1461 to 1484 form a disordered region; sequence KDELAELSEAESEGDEKPKLRRPC. Positions 1465-1474 are enriched in acidic residues; sequence AELSEAESEG. 2 positions are modified to phosphoserine: Ser1468 and Ser1472. The span at 1475–1484 shows a compositional bias: basic and acidic residues; it reads DEKPKLRRPC. Residues Lys1588, Lys1738, and Lys1903 each participate in a glycyl lysine isopeptide (Lys-Gly) (interchain with G-Cter in SUMO2) cross-link. Ser2026 bears the Phosphoserine mark. Residues 2031-2035 carry the LXXLL motif 3 motif; that stretch reads LPRLL. Lys2038 is covalently cross-linked (Glycyl lysine isopeptide (Lys-Gly) (interchain with G-Cter in SUMO2)). Disordered stretches follow at residues 2050-2238 and 2305-2337; these read ENLK…QMNN and GAAT…SKVK. Phosphoserine occurs at positions 2058 and 2059. Lys2074 participates in a covalent cross-link: Glycyl lysine isopeptide (Lys-Gly) (interchain with G-Cter in SUMO2). Phosphoserine is present on residues Ser2075 and Ser2079. Over residues 2094-2104 the composition is skewed to basic and acidic residues; the sequence is SGGKCETDRRM. Residues 2141 to 2193 show a composition bias toward low complexity; the sequence is SSCSSRSSSSSSSSSCSHSRSGSSSSSSSSCSSASSSSSSSTSSSSSSSSSSS. Residues 2203 to 2216 are compositionally biased toward basic and acidic residues; it reads AQKRESTTHMKAYD. Residues 2221 to 2238 show a composition bias toward polar residues; the sequence is ASLSTTQDETQDSFQMNN. Residues 2332-2481 are binds A/T-rich DNA; it reads QMSKVKKHVR…LSYTQPQGIP (150 aa). Glycyl lysine isopeptide (Lys-Gly) (interchain with G-Cter in SUMO2) cross-links involve residues Lys2350, Lys2356, and Lys2361. Residues 2429 to 2436 form an a.T hook-like region; sequence KKRRGRRK. Positions 2721–2725 match the LXXLL motif 4 motif; the sequence is LPNLL. The tract at residues 2729 to 2777 is disordered; that stretch reads GLLTKPTESGTEDKKGSDSKESEGKTERTESQSSENGGENSVSSSPSTS. The span at 2739 to 2758 shows a compositional bias: basic and acidic residues; the sequence is TEDKKGSDSKESEGKTERTE. Residues 2759 to 2777 are compositionally biased toward low complexity; sequence SQSSENGGENSVSSSPSTS. Positions 2793–2797 match the LXXLL motif 5 motif; that stretch reads LNPLL. The segment at 2827–2897 is disordered; the sequence is VQNKNSDLGS…SEDSDSSNED (71 aa). Positions 2840–2857 are enriched in basic and acidic residues; the sequence is VEVKEEDSRIKDQEDKGG. A Glycyl lysine isopeptide (Lys-Gly) (interchain with G-Cter in SUMO2) cross-link involves residue Lys2843. A compositionally biased stretch (low complexity) spans 2877–2888; the sequence is ASSGSDSTSSSS.

Belongs to the SNF2/RAD54 helicase family. Interacts with PPARA. Probably interacts with ESR1 and NR1I3. Phosphorylated on serine and tyrosine residues. In terms of tissue distribution, widely expressed at low levels. In bone marrow, expression is restricted to osteoprogenitor cells adjacent to mature osteoblasts.

Its subcellular location is the cytoplasm. It localises to the nucleus. The catalysed reaction is ATP + H2O = ADP + phosphate + H(+). Probable ATP-dependent chromatin-remodeling factor. Acts as a transcriptional coactivator for PPARA and possibly other nuclear receptors. Has DNA-dependent ATPase activity and binds to A/T-rich DNA. Associates with A/T-rich regulatory regions in promoters of genes that participate in the differentiation of progenitors during osteogenesis. The sequence is that of Chromodomain-helicase-DNA-binding protein 9 (CHD9) from Homo sapiens (Human).